The following is a 339-amino-acid chain: Dual specificity protein phosphatase 12 (339 aa).

M1 bears the N-acetylmethionine mark. Residues 1 to 22 show a composition bias toward polar residues; it reads MLEVQSSNHGCERQAPTTSPAS. The segment at 1–25 is disordered; that stretch reads MLEVQSSNHGCERQAPTTSPASSAG. The region spanning 26 to 170 is the Tyrosine-protein phosphatase domain; the sequence is HAVEVRPGLY…LKLYEAMGHE (145 aa). C114 acts as the Phosphocysteine intermediate in catalysis. Residue 115–120 participates in substrate binding; that stretch reads HAGVSR. A Phosphoserine modification is found at S334.

This sequence belongs to the protein-tyrosine phosphatase family. Non-receptor class dual specificity subfamily. As to quaternary structure, monomer. It depends on Zn(2+) as a cofactor.

Its subcellular location is the nucleus. It localises to the cytoplasm. The protein localises to the cytosol. It catalyses the reaction O-phospho-L-tyrosyl-[protein] + H2O = L-tyrosyl-[protein] + phosphate. It carries out the reaction O-phospho-L-seryl-[protein] + H2O = L-seryl-[protein] + phosphate. The enzyme catalyses O-phospho-L-threonyl-[protein] + H2O = L-threonyl-[protein] + phosphate. Functionally, dual specificity phosphatase; can dephosphorylate both phosphotyrosine and phosphoserine or phosphothreonine residues. Can dephosphorylate glucokinase (in vitro). Has phosphatase activity with the synthetic substrate 6,8-difluoro-4-methylumbelliferyl phosphate and other in vitro substrates. This is Dual specificity protein phosphatase 12 (Dusp12) from Rattus norvegicus (Rat).